Reading from the N-terminus, the 295-residue chain is Glutamyl-Q tRNA(Asp) synthetase (295 aa).

L-glutamate-binding positions include arginine 9–threonine 13 and glutamate 45. Positions proline 12–serine 22 match the 'HIGH' region motif. 4 residues coordinate Zn(2+): cysteine 101, cysteine 103, tyrosine 115, and cysteine 119. Residues tyrosine 172 and arginine 190 each contribute to the L-glutamate site. The short motif at lysine 228–serine 232 is the 'KMSKS' region element. Position 231 (lysine 231) interacts with ATP.

Belongs to the class-I aminoacyl-tRNA synthetase family. GluQ subfamily. Requires Zn(2+) as cofactor.

Catalyzes the tRNA-independent activation of glutamate in presence of ATP and the subsequent transfer of glutamate onto a tRNA(Asp). Glutamate is transferred on the 2-amino-5-(4,5-dihydroxy-2-cyclopenten-1-yl) moiety of the queuosine in the wobble position of the QUC anticodon. The protein is Glutamyl-Q tRNA(Asp) synthetase of Pseudomonas putida (strain GB-1).